The chain runs to 219 residues: Peroxiredoxin (219 aa).

Positions 2–164 (PLIGDDAPSF…IKRIVVALQK (163 aa)) constitute a Thioredoxin domain. Residue C44 is the Cysteine sulfenic acid (-SOH) intermediate of the active site. R127 is a substrate binding site. A disulfide bridge links C206 with C212.

This sequence belongs to the peroxiredoxin family. Prx6 subfamily. Homodecamer. Pentamer of dimers that assemble into a ring structure.

It localises to the cytoplasm. The enzyme catalyses a hydroperoxide + [thioredoxin]-dithiol = an alcohol + [thioredoxin]-disulfide + H2O. Thiol-specific peroxidase that catalyzes the reduction of hydrogen peroxide and organic hydroperoxides to water and alcohols, respectively. Plays a role in cell protection against oxidative stress by detoxifying peroxides. The polypeptide is Peroxiredoxin (Methanosarcina mazei (strain ATCC BAA-159 / DSM 3647 / Goe1 / Go1 / JCM 11833 / OCM 88) (Methanosarcina frisia)).